A 255-amino-acid polypeptide reads, in one-letter code: Protein PH0439 (255 aa).

The protein belongs to the CinA family.

This chain is Protein PH0439, found in Pyrococcus horikoshii (strain ATCC 700860 / DSM 12428 / JCM 9974 / NBRC 100139 / OT-3).